The following is a 170-amino-acid chain: Cathelicidin antimicrobial peptide (170 aa).

The first 30 residues, 1–30 (MKTQRDSPSLGRWSLVLLLLGLVMPLAIVA), serve as a signal peptide directing secretion. A propeptide spans 31–131 (QVLSYQEAVL…DISCDKDNRR (101 aa)) (cathelin-like domain (CLD)). 2 disulfide bridges follow: Cys-86–Cys-97 and Cys-108–Cys-125. The interval 150–162 (FKRIVQRIKDFLQ) is active core.

Belongs to the cathelicidin family. As to quaternary structure, monomer, homodimer or homotrimer (in vitro). Oligomerizes as tetra- or hexamer in solution (in vitro). In terms of processing, proteolytically cleaved by proteinase PRTN3 into antibacterial peptide LL-37. Proteolytically cleaved by cathepsin CTSG and neutrophil elastase ELANE. Resistant to proteolytic degradation in solution, and when bound to both zwitterionic (mimicking mammalian membranes) and negatively charged membranes (mimicking bacterial membranes). Post-translationally, after secretion onto the skin surface, the CAMP gene product is processed by a serine protease-dependent mechanism into multiple novel antimicrobial peptides distinct from and shorter than cathelicidin LL-37. These peptides show enhanced antimicrobial action, acquiring the ability to kill skin pathogens such as S.aureus, E.coli and C.albicans. These peptides have lost the ability to stimulate CXCL8/IL8 release from keratinocytes. The peptides act synergistically, killing bacteria at lower concentrations when present together, and maintain activity at increased salt condition.

It localises to the secreted. Its subcellular location is the vesicle. Its function is as follows. Antimicrobial protein that is an integral component of the innate immune system. Binds to bacterial lipopolysaccharides (LPS). Acts via neutrophil N-formyl peptide receptors to enhance the release of CXCL2. Postsecretory processing generates multiple cathelicidin antimicrobial peptides with various lengths which act as a topical antimicrobial defense in sweat on skin. The unprocessed precursor form, cathelicidin antimicrobial peptide, inhibits the growth of Gram-negative E.coli and E.aerogenes with efficiencies comparable to that of the mature peptide LL-37 (in vitro). In terms of biological role, antimicrobial peptide that is an integral component of the innate immune system. Binds to bacterial lipopolysaccharides (LPS). Causes membrane permeabilization by forming transmembrane pores (in vitro). Causes lysis of E.coli. Exhibits antimicrobial activity against Gram-negative bacteria such as P.aeruginosa, S.typhimurium, E.aerogenes, E.coli and P.syringae, Gram-positive bacteria such as L.monocytogenes, S.epidermidis, S.pyogenes and S.aureus, as well as vancomycin-resistant enterococci (in vitro). Exhibits antimicrobial activity against methicillin-resistant S.aureus, P.mirabilis, and C.albicans in low-salt media, but not in media containing 100 mM NaCl (in vitro). Forms chiral supramolecular assemblies with quinolone signal (PQS) molecules of P.aeruginosa, which may lead to interference of bacterial quorum signaling and perturbance of bacterial biofilm formation. May form supramolecular fiber-like assemblies on bacterial membranes. Induces cytokine and chemokine producation as well as TNF/TNFA and CSF2/GMCSF production in normal human keratinocytes. Exhibits hemolytic activity against red blood cells. Exhibits antimicrobial activity against E.coli and B.megaterium (in vitro). This Nomascus concolor (Black crested gibbon) protein is Cathelicidin antimicrobial peptide.